Reading from the N-terminus, the 459-residue chain is UDP-N-acetylmuramoylalanine--D-glutamate ligase (459 aa).

119–125 (GTNGKTT) contributes to the ATP binding site.

Belongs to the MurCDEF family.

Its subcellular location is the cytoplasm. The enzyme catalyses UDP-N-acetyl-alpha-D-muramoyl-L-alanine + D-glutamate + ATP = UDP-N-acetyl-alpha-D-muramoyl-L-alanyl-D-glutamate + ADP + phosphate + H(+). It functions in the pathway cell wall biogenesis; peptidoglycan biosynthesis. In terms of biological role, cell wall formation. Catalyzes the addition of glutamate to the nucleotide precursor UDP-N-acetylmuramoyl-L-alanine (UMA). The polypeptide is UDP-N-acetylmuramoylalanine--D-glutamate ligase (Lactiplantibacillus plantarum (strain ATCC BAA-793 / NCIMB 8826 / WCFS1) (Lactobacillus plantarum)).